Here is a 379-residue protein sequence, read N- to C-terminus: Tetraacyldisaccharide 4'-kinase (379 aa).

Residue 63 to 70 (AVGGAGKT) coordinates ATP.

The protein belongs to the LpxK family.

It catalyses the reaction a lipid A disaccharide + ATP = a lipid IVA + ADP + H(+). It functions in the pathway glycolipid biosynthesis; lipid IV(A) biosynthesis; lipid IV(A) from (3R)-3-hydroxytetradecanoyl-[acyl-carrier-protein] and UDP-N-acetyl-alpha-D-glucosamine: step 6/6. Functionally, transfers the gamma-phosphate of ATP to the 4'-position of a tetraacyldisaccharide 1-phosphate intermediate (termed DS-1-P) to form tetraacyldisaccharide 1,4'-bis-phosphate (lipid IVA). The sequence is that of Tetraacyldisaccharide 4'-kinase from Anaeromyxobacter dehalogenans (strain 2CP-1 / ATCC BAA-258).